Consider the following 200-residue polypeptide: Cytochrome c biogenesis ATP-binding export protein CcmA (200 aa).

Positions 1 to 200 constitute an ABC transporter domain; the sequence is MRLSGNGLRC…ARELRIGGAA (200 aa). An ATP-binding site is contributed by 35-42; sequence GPNGAGKT.

Belongs to the ABC transporter superfamily. CcmA exporter (TC 3.A.1.107) family. In terms of assembly, the complex is composed of two ATP-binding proteins (CcmA) and two transmembrane proteins (CcmB).

The protein resides in the cell inner membrane. It catalyses the reaction heme b(in) + ATP + H2O = heme b(out) + ADP + phosphate + H(+). Functionally, part of the ABC transporter complex CcmAB involved in the biogenesis of c-type cytochromes; once thought to export heme, this seems not to be the case, but its exact role is uncertain. Responsible for energy coupling to the transport system. This Nitrobacter winogradskyi (strain ATCC 25391 / DSM 10237 / CIP 104748 / NCIMB 11846 / Nb-255) protein is Cytochrome c biogenesis ATP-binding export protein CcmA.